A 116-amino-acid polypeptide reads, in one-letter code: Large ribosomal subunit protein eL31 (116 aa).

Belongs to the eukaryotic ribosomal protein eL31 family.

This Chlamydomonas reinhardtii (Chlamydomonas smithii) protein is Large ribosomal subunit protein eL31 (RPL31).